The chain runs to 164 residues: Phosphopantetheine adenylyltransferase (164 aa).

A substrate-binding site is contributed by serine 9. Residues 9 to 10 (SF) and histidine 17 contribute to the ATP site. Positions 41, 73, and 87 each coordinate substrate. Residues 88–90 (GLR), glutamate 98, and 123–129 (YTFLSSS) each bind ATP.

The protein belongs to the bacterial CoaD family. In terms of assembly, homohexamer. Mg(2+) serves as cofactor.

It localises to the cytoplasm. It catalyses the reaction (R)-4'-phosphopantetheine + ATP + H(+) = 3'-dephospho-CoA + diphosphate. Its pathway is cofactor biosynthesis; coenzyme A biosynthesis; CoA from (R)-pantothenate: step 4/5. Functionally, reversibly transfers an adenylyl group from ATP to 4'-phosphopantetheine, yielding dephospho-CoA (dPCoA) and pyrophosphate. The sequence is that of Phosphopantetheine adenylyltransferase from Dictyoglomus thermophilum (strain ATCC 35947 / DSM 3960 / H-6-12).